A 494-amino-acid polypeptide reads, in one-letter code: Aspartyl/glutamyl-tRNA(Asn/Gln) amidotransferase subunit B (494 aa).

The protein belongs to the GatB/GatE family. GatB subfamily. As to quaternary structure, heterotrimer of A, B and C subunits.

The enzyme catalyses L-glutamyl-tRNA(Gln) + L-glutamine + ATP + H2O = L-glutaminyl-tRNA(Gln) + L-glutamate + ADP + phosphate + H(+). The catalysed reaction is L-aspartyl-tRNA(Asn) + L-glutamine + ATP + H2O = L-asparaginyl-tRNA(Asn) + L-glutamate + ADP + phosphate + 2 H(+). Its function is as follows. Allows the formation of correctly charged Asn-tRNA(Asn) or Gln-tRNA(Gln) through the transamidation of misacylated Asp-tRNA(Asn) or Glu-tRNA(Gln) in organisms which lack either or both of asparaginyl-tRNA or glutaminyl-tRNA synthetases. The reaction takes place in the presence of glutamine and ATP through an activated phospho-Asp-tRNA(Asn) or phospho-Glu-tRNA(Gln). This is Aspartyl/glutamyl-tRNA(Asn/Gln) amidotransferase subunit B from Rhodopseudomonas palustris (strain ATCC BAA-98 / CGA009).